The primary structure comprises 389 residues: Arrestin-C (389 aa).

This sequence belongs to the arrestin family. Retina and pineal gland.

Functionally, may play a role in an as yet undefined retina-specific signal transduction. Could bind to photoactivated-phosphorylated red/green opsins. This chain is Arrestin-C (arr3), found in Lithobates pipiens (Northern leopard frog).